The chain runs to 166 residues: MPEDNLSGDGGPPVDIDISVEAGDWPDEAGLARLVDRAVDAAFAETGVTGRSELSVVFSDDAHIRTLNAEWRGKDKPTNVLSFPAFPFAQGGPLPPMLGDIVLAAETVSREAALEDKPVQNHITHLVIHGLLHLLGHDHETDAEAEAMEAIERAALARLAIPDPYA.

Zn(2+) contacts are provided by histidine 129, histidine 133, and histidine 139.

The protein belongs to the endoribonuclease YbeY family. It depends on Zn(2+) as a cofactor.

The protein resides in the cytoplasm. Single strand-specific metallo-endoribonuclease involved in late-stage 70S ribosome quality control and in maturation of the 3' terminus of the 16S rRNA. In Mesorhizobium japonicum (strain LMG 29417 / CECT 9101 / MAFF 303099) (Mesorhizobium loti (strain MAFF 303099)), this protein is Endoribonuclease YbeY.